The primary structure comprises 644 residues: Exoribonuclease 2 (644 aa).

The RNB domain occupies 189 to 516 (RQDLTALNFV…NHRLLKAAIK (328 aa)). The region spanning 561 to 643 (DTRFAAEIID…ETRSIIARPV (83 aa)) is the S1 motif domain.

This sequence belongs to the RNR ribonuclease family. RNase II subfamily.

The protein resides in the cytoplasm. It carries out the reaction Exonucleolytic cleavage in the 3'- to 5'-direction to yield nucleoside 5'-phosphates.. Its function is as follows. Involved in mRNA degradation. Hydrolyzes single-stranded polyribonucleotides processively in the 3' to 5' direction. The protein is Exoribonuclease 2 of Escherichia fergusonii (strain ATCC 35469 / DSM 13698 / CCUG 18766 / IAM 14443 / JCM 21226 / LMG 7866 / NBRC 102419 / NCTC 12128 / CDC 0568-73).